The chain runs to 388 residues: Succinate--CoA ligase [ADP-forming] subunit beta (388 aa).

ATP-binding positions include lysine 46, 53–55 (GRG), glutamate 99, cysteine 102, and glutamate 107. Residues asparagine 199 and aspartate 213 each contribute to the Mg(2+) site. Residues asparagine 264 and 321-323 (GIV) contribute to the substrate site.

This sequence belongs to the succinate/malate CoA ligase beta subunit family. As to quaternary structure, heterotetramer of two alpha and two beta subunits. Requires Mg(2+) as cofactor.

The catalysed reaction is succinate + ATP + CoA = succinyl-CoA + ADP + phosphate. It catalyses the reaction GTP + succinate + CoA = succinyl-CoA + GDP + phosphate. Its pathway is carbohydrate metabolism; tricarboxylic acid cycle; succinate from succinyl-CoA (ligase route): step 1/1. In terms of biological role, succinyl-CoA synthetase functions in the citric acid cycle (TCA), coupling the hydrolysis of succinyl-CoA to the synthesis of either ATP or GTP and thus represents the only step of substrate-level phosphorylation in the TCA. The beta subunit provides nucleotide specificity of the enzyme and binds the substrate succinate, while the binding sites for coenzyme A and phosphate are found in the alpha subunit. This is Succinate--CoA ligase [ADP-forming] subunit beta from Actinobacillus pleuropneumoniae serotype 7 (strain AP76).